Here is an 840-residue protein sequence, read N- to C-terminus: Phosphatidylglycerol lysyltransferase (840 aa).

Topologically, residues 1-8 (MTQELKSK) are cytoplasmic. A helical transmembrane segment spans residues 9–29 (LLSFFKFIFATALFIFVIFTL). At 30–52 (YRELSHINFKETFIQFGKINRLW) the chain is on the extracellular side. A helical transmembrane segment spans residues 53–73 (LVLLFAGGGLSLILLSLYDII). The Cytoplasmic portion of the chain corresponds to 74–89 (LVKALKLKMPLIRVFR). The chain crosses the membrane as a helical span at residues 90–110 (VSYIINALNSIIGFGGFIGAG). The Extracellular portion of the chain corresponds to 111 to 129 (VRAFVYKNYTNDTKKLVQY). The helical transmembrane segment at 130 to 150 (ISIILVSMLTGLSLLSILVVL) threads the bilayer. Topologically, residues 151–161 (RIFNASHMIDE) are cytoplasmic. The chain crosses the membrane as a helical span at residues 162 to 182 (ISWVRWILYIVALFLPIFIFY). Topologically, residues 183–200 (TVARPVDRNNRYMGVYCT) are extracellular. Residues 201-221 (VVSCVEWMAAATVLYFAALIV) form a helical membrane-spanning segment. Residues 222 to 229 (DIHISFMT) are Cytoplasmic-facing. The helical transmembrane segment at 230-250 (FVGIFVIAALSGLVSFIPGGF) threads the bilayer. Residues 251–270 (GAFDLVVLLGLKSLGISEEK) are Extracellular-facing. Residues 271 to 291 (ILLALVLYRFAYYFVPVMIAL) traverse the membrane as a helical segment. Topologically, residues 292–337 (ILSSFEFGNTAKKYLDNSKYFIPVKDFTSFLRSYQKDILAKVPSFS) are cytoplasmic. A helical transmembrane segment spans residues 338–358 (LAILIFLTSIIFFINNLTIVY). At 359-366 (DGLYDGNH) the chain is on the extracellular side. Residues 367 to 387 (FAYYIALAIQTSACLLLILNV) form a helical membrane-spanning segment. The Cytoplasmic segment spans residues 388–392 (RGIYK). Residues 393–413 (GSRRAIIYAFISIILIASATI) form a helical membrane-spanning segment. Topologically, residues 414–415 (YT) are extracellular. Residues 416–436 (YASFLLLSWLIIIFVLLILAY) traverse the membrane as a helical segment. At 437–450 (QRAQVLKRPLRFKK) the chain is on the cytoplasmic side. Residues 451–471 (LAFMLLLSIFILYLNHILISG) traverse the membrane as a helical segment. Residues 472–489 (TLYALDVYHIEIDTSLLR) are Extracellular-facing. Residues 490 to 510 (YYFWMTIVIIMLLVGVIAWLF) traverse the membrane as a helical segment. Residues 511–840 (DYKYKRPHHS…LKVMRVIRHK (330 aa)) lie on the Cytoplasmic side of the membrane.

It belongs to the LPG synthase family.

It is found in the cell membrane. The enzyme catalyses L-lysyl-tRNA(Lys) + a 1,2-diacyl-sn-glycero-3-phospho-(1'-sn-glycerol) = a 1,2-diacyl-sn-glycero-3-phospho-1'-(3'-O-L-lysyl)-sn-glycerol + tRNA(Lys). In terms of biological role, catalyzes the transfer of a lysyl group from L-lysyl-tRNA(Lys) to membrane-bound phosphatidylglycerol (PG), which produces lysylphosphatidylglycerol (LPG), a major component of the bacterial membrane with a positive net charge. LPG synthesis contributes to bacterial virulence as it is involved in the resistance mechanism against cationic antimicrobial peptides (CAMP) produces by the host's immune system (defensins, cathelicidins) and by the competing microorganisms (bacteriocins). In fact, the modification of anionic phosphatidylglycerol with positively charged L-lysine results in repulsion of the peptides. The protein is Phosphatidylglycerol lysyltransferase (mprF) of Staphylococcus epidermidis (strain ATCC 35984 / DSM 28319 / BCRC 17069 / CCUG 31568 / BM 3577 / RP62A).